A 309-amino-acid polypeptide reads, in one-letter code: Porphobilinogen deaminase (309 aa).

C242 is modified (S-(dipyrrolylmethanemethyl)cysteine).

This sequence belongs to the HMBS family. In terms of assembly, monomer. Dipyrromethane serves as cofactor.

It catalyses the reaction 4 porphobilinogen + H2O = hydroxymethylbilane + 4 NH4(+). It functions in the pathway porphyrin-containing compound metabolism; protoporphyrin-IX biosynthesis; coproporphyrinogen-III from 5-aminolevulinate: step 2/4. In terms of biological role, tetrapolymerization of the monopyrrole PBG into the hydroxymethylbilane pre-uroporphyrinogen in several discrete steps. The polypeptide is Porphobilinogen deaminase (Legionella pneumophila (strain Paris)).